Here is a 239-residue protein sequence, read N- to C-terminus: Phosphoribosylaminoimidazole-succinocarboxamide synthase (239 aa).

It belongs to the SAICAR synthetase family.

The catalysed reaction is 5-amino-1-(5-phospho-D-ribosyl)imidazole-4-carboxylate + L-aspartate + ATP = (2S)-2-[5-amino-1-(5-phospho-beta-D-ribosyl)imidazole-4-carboxamido]succinate + ADP + phosphate + 2 H(+). The protein operates within purine metabolism; IMP biosynthesis via de novo pathway; 5-amino-1-(5-phospho-D-ribosyl)imidazole-4-carboxamide from 5-amino-1-(5-phospho-D-ribosyl)imidazole-4-carboxylate: step 1/2. This chain is Phosphoribosylaminoimidazole-succinocarboxamide synthase, found in Acinetobacter baylyi (strain ATCC 33305 / BD413 / ADP1).